Consider the following 99-residue polypeptide: Cell division protein FtsB (99 aa).

The Cytoplasmic segment spans residues 1–3 (MRV). Residues 4–21 (FTAILLILLVLLQYRLWF) form a helical membrane-spanning segment. The Periplasmic segment spans residues 22 to 99 (GKNSVPDYLV…KENSTRNVNN (78 aa)). A coiled-coil region spans residues 29–53 (YLVLKENVVRQQSANEKLQQRNKLL).

It belongs to the FtsB family. Part of a complex composed of FtsB, FtsL and FtsQ.

The protein localises to the cell inner membrane. Essential cell division protein. May link together the upstream cell division proteins, which are predominantly cytoplasmic, with the downstream cell division proteins, which are predominantly periplasmic. This is Cell division protein FtsB from Colwellia psychrerythraea (strain 34H / ATCC BAA-681) (Vibrio psychroerythus).